A 100-amino-acid polypeptide reads, in one-letter code: Large ribosomal subunit protein bL27 (100 aa).

The propeptide occupies 1-9 (MLVMNLQLF).

The protein belongs to the bacterial ribosomal protein bL27 family. In terms of processing, the N-terminus is cleaved by ribosomal processing cysteine protease Prp.

The sequence is that of Large ribosomal subunit protein bL27 from Clostridium botulinum (strain 657 / Type Ba4).